Here is a 564-residue protein sequence, read N- to C-terminus: Dihydroxy-acid dehydratase (564 aa).

Position 80 (aspartate 80) interacts with Mg(2+). Cysteine 121 contacts [2Fe-2S] cluster. Mg(2+)-binding residues include aspartate 122 and lysine 123. An N6-carboxylysine modification is found at lysine 123. Cysteine 194 is a [2Fe-2S] cluster binding site. Residue glutamate 447 coordinates Mg(2+). The Proton acceptor role is filled by serine 473.

The protein belongs to the IlvD/Edd family. As to quaternary structure, homodimer. [2Fe-2S] cluster is required as a cofactor. Mg(2+) serves as cofactor.

It catalyses the reaction (2R)-2,3-dihydroxy-3-methylbutanoate = 3-methyl-2-oxobutanoate + H2O. It carries out the reaction (2R,3R)-2,3-dihydroxy-3-methylpentanoate = (S)-3-methyl-2-oxopentanoate + H2O. Its pathway is amino-acid biosynthesis; L-isoleucine biosynthesis; L-isoleucine from 2-oxobutanoate: step 3/4. It participates in amino-acid biosynthesis; L-valine biosynthesis; L-valine from pyruvate: step 3/4. Functions in the biosynthesis of branched-chain amino acids. Catalyzes the dehydration of (2R,3R)-2,3-dihydroxy-3-methylpentanoate (2,3-dihydroxy-3-methylvalerate) into 2-oxo-3-methylpentanoate (2-oxo-3-methylvalerate) and of (2R)-2,3-dihydroxy-3-methylbutanoate (2,3-dihydroxyisovalerate) into 2-oxo-3-methylbutanoate (2-oxoisovalerate), the penultimate precursor to L-isoleucine and L-valine, respectively. The sequence is that of Dihydroxy-acid dehydratase from Listeria innocua serovar 6a (strain ATCC BAA-680 / CLIP 11262).